Consider the following 310-residue polypeptide: NADP-dependent D-sorbitol-6-phosphate dehydrogenase (310 aa).

The active-site Proton donor is Tyr-48. His-108 contributes to the substrate binding site. Residue 210 to 272 participates in NADP(+) binding; that stretch reads TPLGGAAANK…SSKIQRLKEN (63 aa).

The protein belongs to the aldo/keto reductase family.

It carries out the reaction D-sorbitol 6-phosphate + NADP(+) = aldehydo-D-glucose 6-phosphate + NADPH + H(+). Functionally, synthesizes sorbitol-6-phosphate, a key intermediate in the synthesis of sorbitol which is a major photosynthetic product in many members of the Rosaceae family. The polypeptide is NADP-dependent D-sorbitol-6-phosphate dehydrogenase (S6PDH) (Malus domestica (Apple)).